The primary structure comprises 874 residues: Alanine--tRNA ligase (874 aa).

Residues His563, His567, Cys665, and His669 each coordinate Zn(2+).

The protein belongs to the class-II aminoacyl-tRNA synthetase family. Zn(2+) serves as cofactor.

The protein resides in the cytoplasm. It catalyses the reaction tRNA(Ala) + L-alanine + ATP = L-alanyl-tRNA(Ala) + AMP + diphosphate. Its function is as follows. Catalyzes the attachment of alanine to tRNA(Ala) in a two-step reaction: alanine is first activated by ATP to form Ala-AMP and then transferred to the acceptor end of tRNA(Ala). Also edits incorrectly charged Ser-tRNA(Ala) and Gly-tRNA(Ala) via its editing domain. In Actinobacillus succinogenes (strain ATCC 55618 / DSM 22257 / CCUG 43843 / 130Z), this protein is Alanine--tRNA ligase.